Reading from the N-terminus, the 139-residue chain is Metallothiol transferase FosB (139 aa).

The 116-residue stretch at 4-119 (GINHITYSVS…DGHKLELHTG (116 aa)) folds into the VOC domain. 3 residues coordinate Mg(2+): His7, His66, and Glu115. Glu115 serves as the catalytic Proton donor/acceptor.

Belongs to the fosfomycin resistance protein family. FosB subfamily. As to quaternary structure, homodimer. Requires Mg(2+) as cofactor.

The protein resides in the cytoplasm. Metallothiol transferase which confers resistance to fosfomycin by catalyzing the addition of a thiol cofactor to fosfomycin. L-cysteine is probably the physiological thiol donor. The polypeptide is Metallothiol transferase FosB (Staphylococcus epidermidis).